Consider the following 432-residue polypeptide: Adenylosuccinate synthetase (432 aa).

GTP contacts are provided by residues 13 to 19 and 41 to 43; these read GDEGKGK and GHT. Residue D14 is the Proton acceptor of the active site. Mg(2+) contacts are provided by D14 and G41. IMP-binding positions include 14–17, 39–42, T130, R144, Q225, T240, and R304; these read DEGK and NAGH. H42 (proton donor) is an active-site residue. Substrate is bound at residue 300 to 306; the sequence is AVTGRPR. Residues R306, 332-334, and 415-417 contribute to the GTP site; these read KLD and STG.

Belongs to the adenylosuccinate synthetase family. Homodimer. It depends on Mg(2+) as a cofactor.

The protein localises to the cytoplasm. The catalysed reaction is IMP + L-aspartate + GTP = N(6)-(1,2-dicarboxyethyl)-AMP + GDP + phosphate + 2 H(+). It functions in the pathway purine metabolism; AMP biosynthesis via de novo pathway; AMP from IMP: step 1/2. Its function is as follows. Plays an important role in the de novo pathway of purine nucleotide biosynthesis. Catalyzes the first committed step in the biosynthesis of AMP from IMP. This is Adenylosuccinate synthetase from Mannheimia succiniciproducens (strain KCTC 0769BP / MBEL55E).